Reading from the N-terminus, the 580-residue chain is Tricyclene synthase TPS4, chloroplastic (580 aa).

The N-terminal 41 residues, 1 to 41, are a transit peptide targeting the chloroplast; that stretch reads MLLNSSFISLPSFFKSQELGRTNLLIHRNGSPLLCYATNTN. Positions 296, 334, 338, 475, and 478 each coordinate (2E)-geranyl diphosphate. The Mg(2+) site is built by D334 and D338. Positions 334-338 match the DDXXD motif motif; the sequence is DDIYD. Mg(2+)-binding residues include N478, T482, and E486.

Belongs to the terpene synthase family. Tpsb subfamily. Mg(2+) serves as cofactor. Mn(2+) is required as a cofactor. In terms of tissue distribution, expressed in leaves.

The protein localises to the plastid. It localises to the chloroplast stroma. It carries out the reaction (2E)-geranyl diphosphate = tricyclene + diphosphate. The catalysed reaction is (2E)-geranyl diphosphate = (E)-beta-ocimene + diphosphate. It participates in secondary metabolite biosynthesis; terpenoid biosynthesis. Promotes the emission of terpenes volatile organic compounds (VOC) in response to damage mediated by arthropod herbivores (e.g. Spodoptera exigua), probably to attract natural enemies of the herbivores. This Medicago truncatula (Barrel medic) protein is Tricyclene synthase TPS4, chloroplastic (TPS4).